The following is a 172-amino-acid chain: Hemagglutinin/amebocyte aggregation factor (172 aa).

Residues 1 to 19 (MNSPAIVIIIFSTLTFSEA) form the signal peptide. Tandem repeats lie at residues 21 to 25 (VNDWD), 50 to 54 (EDRRW), 73 to 77 (VNDWD), and 102 to 106 (EDRRW). Cystine bridges form between Cys-32–Cys-58, Cys-67–Cys-172, Cys-84–Cys-110, Cys-111–Cys-117, and Cys-123–Cys-167. A run of 2 repeats spans residues 129 to 133 (VNSWD) and 158 to 162 (EDRRW).

Belongs to the dermatopontin family.

Its subcellular location is the secreted. Its function is as follows. Possesses the property of inducing both aggregation of amebocytes and agglutination of erythrocytes. This Limulus polyphemus (Atlantic horseshoe crab) protein is Hemagglutinin/amebocyte aggregation factor.